Consider the following 68-residue polypeptide: MPKLKTKSAVKKRFSLSSSGKLKVTQAGKRHFMRRRTKKQLRNLRSTTTLIGQDAKNIIKYLMPYGVQ.

The protein belongs to the bacterial ribosomal protein bL35 family.

The sequence is that of Large ribosomal subunit protein bL35 from Orientia tsutsugamushi (strain Boryong) (Rickettsia tsutsugamushi).